The following is a 480-amino-acid chain: Gasdermin-C4 (480 aa).

Residues 1-226 form a triggers pyroptosis region; that stretch reads MGYSFDRASK…TCVILPSATK (226 aa).

The protein belongs to the gasdermin family. Homooligomer; homooligomeric ring-shaped pore complex containing 27-28 subunits when inserted in the membrane. Cleavage by CASP8 relieves autoinhibition by releasing the N-terminal moiety (Gasdermin-C4, N-terminal) that initiates pyroptosis. In terms of processing, palmitoylated.

It localises to the cytoplasm. The protein resides in the cytosol. The protein localises to the cell membrane. Its activity is regulated as follows. The full-length protein before cleavage is inactive: intramolecular interactions between N- and C-terminal domains mediate autoinhibition in the absence of activation signal. The intrinsic pyroptosis-inducing activity is carried by the released N-terminal moiety (Gasdermin-C4, N-terminal) following cleavage by caspase CASP8. In terms of biological role, this form constitutes the precursor of the pore-forming protein: upon cleavage, the released N-terminal moiety (Gasdermin-C4, N-terminal) binds to membranes and forms pores, triggering pyroptosis. Pore-forming protein that causes membrane permeabilization and pyroptosis. Produced by the cleavage of gasdermin-C4 by caspase CASP8 in response to death signals. After cleavage, moves to the plasma membrane where it strongly binds to membrane inner leaflet lipids. Homooligomerizes within the membrane and forms pores of 10-15 nanometers (nm) of inner diameter, triggering pyroptosis. In Mus musculus (Mouse), this protein is Gasdermin-C4.